The chain runs to 997 residues: Autophagy-related protein 9 (997 aa).

Residues 1 to 318 (MERDEYQLPN…DVYNYYLGNG (318 aa)) lie on the Cytoplasmic side of the membrane. At Ser19 the chain carries Phosphoserine; by ATG1. Polar residues predominate over residues 29 to 39 (VNPSLNSQEMS). The tract at residues 29-88 (VNPSLNSQEMSNFPLPDIERGSSLLHSTNDSREDVDENDLRVPESDQGTSTEEEDEVDEE) is disordered. Residues 79 to 88 (TEEEDEVDEE) are compositionally biased toward acidic residues. Glycyl lysine isopeptide (Lys-Gly) (interchain with G-Cter in ubiquitin) cross-links involve residues Lys113 and Lys121. Position 122 is a phosphoserine (Ser122). Disordered regions lie at residues 128-159 (VEGSTDDSVPKVGQLSSEEEEDNEFINNDGFD) and 213-235 (IHHDKDKSANNGPRNINGNQKHG). A Glycyl lysine isopeptide (Lys-Gly) (interchain with G-Cter in ubiquitin) cross-link involves residue Lys138. Ser143 and Ser144 each carry phosphoserine. Over residues 144-159 (SEEEEDNEFINNDGFD) the composition is skewed to acidic residues. Residues 221-233 (ANNGPRNINGNQK) show a composition bias toward polar residues. Residues 319 to 339 (FYCIILEKILNICTLLFVVFV) form a helical membrane-spanning segment. At 340–376 (STYMGHCVDYSKLPTSHRVSDIIIDKCYSNSITGFTK) the chain is on the lumenal side. A helical membrane pass occupies residues 377–397 (FFLWMFYFFVILKIVQLYFDV). Over 398–538 (QKLSELQNFY…EELQKRFMLA (141 aa)) the chain is Cytoplasmic. Residues 539-559 (GFLNIILAPFLVTYFVLLYFF) lie within the membrane without spanning it. Topologically, residues 560–620 (RYFNEYKTSP…DQFPKEKTNL (61 aa)) are cytoplasmic. A helical membrane pass occupies residues 621–641 (FLKFVSFICGSFVAILAFLTV). The Lumenal segment spans residues 642 to 656 (FDPENFLNFEITSDR). Position 657 is a phosphoserine; by ATG1 (Ser657). The helical transmembrane segment at 657 to 677 (SVIFYITILGAIWSVSRNTIT) threads the bilayer. Residues 678–723 (QEYHVFDPEETLKELYEYTHYLPKEWEGRYHKEEIKLEFCKLYNLR) lie on the Cytoplasmic side of the membrane. Residue Lys701 forms a Glycyl lysine isopeptide (Lys-Gly) (interchain with G-Cter in ubiquitin) linkage. An intramembrane segment occupies 724 to 744 (IVILLRELTSLMITPFVLWFS). The Cytoplasmic portion of the chain corresponds to 745–997 (LPSSAGRIVD…EYYKKSDVGR (253 aa)). A phosphoserine mark is found at Ser787 and Ser792. Thr794 bears the Phosphothreonine mark. Ser802 is modified (phosphoserine; by ATG1). Thr804 is modified (phosphothreonine; by ATG1). A phosphoserine; by ATG1 mark is found at Ser831 and Ser842. Ser864 is subject to Phosphoserine. Phosphoserine; by ATG1 occurs at positions 948 and 969.

It belongs to the ATG9 family. In terms of assembly, homotrimer; forms a homotrimer with a central pore that forms a path between the two membrane leaflets. Interacts with ATG23 and ATG27 to form a cycling complex for trafficking to the PAS. Interacts (via N-terminus) with ATG11, required for recruitment of ATG9 to the PAS for the Cvt pathway during nutrient-rich conditions. Interacts (via N-terminus) with ATG17; required for recruitment to the PAS during autophagy and starved conditions. Interacts with ATG2 and ATG18; required for the retrieval of ATG9 from the PAS to the cytoplasmic pool. Interacts with ATG41. Interacts with the conserved oligomeric Golgi (COG) complex subunits COG3 and COG4. Interacts with TRS85. In terms of processing, phosphorylated by ATG1; phosphorylation is required for autophagy and cytoplasm to vacuole transport (Cvt) vesicle formation. Phosphorylation by ATG1 regulates ATG18 interaction and preautophagosome elongation. Phosphorylation at Ser-122 is required for selective autophagy by regulating anterograde trafficking and interaction with ATG23 and ATG27. Phosphorylation at Ser-122 prevents ubiquitination by the SCF(MET30) complex. Post-translationally, ubiquitinated by the SCF(MET30) complex in normal conditions, leading to its degradation by the proteasome, thereby preventing inappropriate induction of autophagy. Ubiquitination by the SCF(MET30) complex is prevented by phosphorylation at Ser-122.

It is found in the preautophagosomal structure membrane. The protein localises to the cytoplasmic vesicle membrane. Its subcellular location is the golgi apparatus membrane. It localises to the endoplasmic reticulum membrane. The protein resides in the mitochondrion membrane. The catalysed reaction is a 1,2-diacyl-sn-glycero-3-phosphocholine(in) = a 1,2-diacyl-sn-glycero-3-phosphocholine(out). It carries out the reaction a 1,2-diacyl-sn-glycero-3-phospho-L-serine(in) = a 1,2-diacyl-sn-glycero-3-phospho-L-serine(out). It catalyses the reaction a 1,2-diacyl-sn-glycero-3-phosphoethanolamine(in) = a 1,2-diacyl-sn-glycero-3-phosphoethanolamine(out). The enzyme catalyses a 1,2-diacyl-sn-glycero-3-phospho-(1D-myo-inositol-3-phosphate)(in) = a 1,2-diacyl-sn-glycero-3-phospho-(1D-myo-inositol-3-phosphate)(out). In terms of biological role, phospholipid scramblase involved in autophagy and cytoplasm to vacuole transport (Cvt) vesicle formation. Cycles between the preautophagosomal structure/phagophore assembly site (PAS) and the cytoplasmic vesicle pool and supplies membrane for the growing autophagosome. Lipid scramblase activity plays a key role in preautophagosomal structure/phagophore assembly by distributing the phospholipids that arrive through ATG2 from the cytoplasmic to the luminal leaflet of the bilayer, thereby driving autophagosomal membrane expansion. Required for mitophagy. Also involved in endoplasmic reticulum-specific autophagic process and is essential for the survival of cells subjected to severe ER stress. Recruits vesicle-tethering proteins TRS85 and YPT1 to the autophagosome formation site. Also recruits ATG23 and ATG8 to the PAS. The protein is Autophagy-related protein 9 of Saccharomyces cerevisiae (strain ATCC 204508 / S288c) (Baker's yeast).